A 226-amino-acid polypeptide reads, in one-letter code: Imidazole glycerol phosphate synthase subunit HisH (226 aa).

Positions 6 to 214 (NIALVDYGVG…VERAASRSAA (209 aa)) constitute a Glutamine amidotransferase type-1 domain. The active-site Nucleophile is the C84. Residues H189 and E191 contribute to the active site.

Heterodimer of HisH and HisF.

The protein localises to the cytoplasm. The catalysed reaction is 5-[(5-phospho-1-deoxy-D-ribulos-1-ylimino)methylamino]-1-(5-phospho-beta-D-ribosyl)imidazole-4-carboxamide + L-glutamine = D-erythro-1-(imidazol-4-yl)glycerol 3-phosphate + 5-amino-1-(5-phospho-beta-D-ribosyl)imidazole-4-carboxamide + L-glutamate + H(+). The enzyme catalyses L-glutamine + H2O = L-glutamate + NH4(+). Its pathway is amino-acid biosynthesis; L-histidine biosynthesis; L-histidine from 5-phospho-alpha-D-ribose 1-diphosphate: step 5/9. IGPS catalyzes the conversion of PRFAR and glutamine to IGP, AICAR and glutamate. The HisH subunit catalyzes the hydrolysis of glutamine to glutamate and ammonia as part of the synthesis of IGP and AICAR. The resulting ammonia molecule is channeled to the active site of HisF. This is Imidazole glycerol phosphate synthase subunit HisH from Gloeobacter violaceus (strain ATCC 29082 / PCC 7421).